The primary structure comprises 444 residues: Putative zinc metalloprotease XF_1047 (444 aa).

Residue histidine 22 participates in Zn(2+) binding. The active site involves glutamate 23. A Zn(2+)-binding site is contributed by histidine 26. Residues isoleucine 98–phenylalanine 120 form a helical membrane-spanning segment. A PDZ domain is found at threonine 192–arginine 276. A run of 2 helical transmembrane segments spans residues valine 371–isoleucine 393 and alanine 418–asparagine 440.

It belongs to the peptidase M50B family. Zn(2+) serves as cofactor.

The protein resides in the cell inner membrane. The protein is Putative zinc metalloprotease XF_1047 of Xylella fastidiosa (strain 9a5c).